Reading from the N-terminus, the 332-residue chain is MKTLGEFIVEKQHEFSHATGELTALLSAIKLGAKIIHRDINKAGLVDILGASGAENAQGEVQQKLDLFANEKLKAALKARDIVAGIASEEEDEIVVFEGCEYAKYVVLMDPLDGSSNIDVNVSVGTIFSIYRRVTPVGTPVTEEDFLQPGNKQVAAGYVVYGSSTMLVYTTGCGVHAFTYDPSLGVFCLCQERMRFPEKGKTYSINEGNYIKFPNGVKKYIKFCQEEDKSTNRPYTSRYIGSLVADFHRNLLKGGIYLYPSTASHPDGKLRLLYECNPMAFLAEQAGGKASDGKERILDIIPETLHQRRSFFVGNDHMVEDVERFIREFPDA.

Mg(2+) contacts are provided by Glu89, Asp110, Leu112, and Asp113. Substrate contacts are provided by residues 113–116 (DGSS), Asn206, Tyr239, 257–259 (YLY), and Lys269. Mg(2+) is bound at residue Glu275.

Belongs to the FBPase class 1 family. As to quaternary structure, homotetramer. Requires Mg(2+) as cofactor.

It is found in the cytoplasm. It carries out the reaction beta-D-fructose 1,6-bisphosphate + H2O = beta-D-fructose 6-phosphate + phosphate. It functions in the pathway carbohydrate biosynthesis; gluconeogenesis. The sequence is that of Fructose-1,6-bisphosphatase class 1 from Shigella sonnei (strain Ss046).